Reading from the N-terminus, the 142-residue chain is Large ribosomal subunit protein uL11 (142 aa).

It belongs to the universal ribosomal protein uL11 family. Part of the ribosomal stalk of the 50S ribosomal subunit. Interacts with L10 and the large rRNA to form the base of the stalk. L10 forms an elongated spine to which L12 dimers bind in a sequential fashion forming a multimeric L10(L12)X complex. One or more lysine residues are methylated.

Forms part of the ribosomal stalk which helps the ribosome interact with GTP-bound translation factors. The protein is Large ribosomal subunit protein uL11 of Shigella boydii serotype 4 (strain Sb227).